Reading from the N-terminus, the 669-residue chain is DNA ligase (669 aa).

Residue 35–39 (DFEYD) participates in NAD(+) binding. The disordered stretch occupies residues 52 to 71 (YPEWDSPDSPTHRVGSDKTE). Over residues 61–71 (PTHRVGSDKTE) the composition is skewed to basic and acidic residues. Residues 84-85 (SL) and E115 contribute to the NAD(+) site. K117 acts as the N6-AMP-lysine intermediate in catalysis. NAD(+) is bound by residues R138, E175, K290, and K314. Zn(2+) is bound by residues C408, C411, C426, and C432. Positions 590–669 (PVSARLAGKT…EEEFLRLIEE (80 aa)) constitute a BRCT domain.

Belongs to the NAD-dependent DNA ligase family. LigA subfamily. The cofactor is Mg(2+). Mn(2+) is required as a cofactor.

It carries out the reaction NAD(+) + (deoxyribonucleotide)n-3'-hydroxyl + 5'-phospho-(deoxyribonucleotide)m = (deoxyribonucleotide)n+m + AMP + beta-nicotinamide D-nucleotide.. Functionally, DNA ligase that catalyzes the formation of phosphodiester linkages between 5'-phosphoryl and 3'-hydroxyl groups in double-stranded DNA using NAD as a coenzyme and as the energy source for the reaction. It is essential for DNA replication and repair of damaged DNA. The chain is DNA ligase from Porphyromonas gingivalis (strain ATCC 33277 / DSM 20709 / CIP 103683 / JCM 12257 / NCTC 11834 / 2561).